The sequence spans 227 residues: Enolase-phosphatase E1 (227 aa).

This sequence belongs to the HAD-like hydrolase superfamily. MasA/MtnC family. As to quaternary structure, monomer. Requires Mg(2+) as cofactor.

It carries out the reaction 5-methylsulfanyl-2,3-dioxopentyl phosphate + H2O = 1,2-dihydroxy-5-(methylsulfanyl)pent-1-en-3-one + phosphate. It participates in amino-acid biosynthesis; L-methionine biosynthesis via salvage pathway; L-methionine from S-methyl-5-thio-alpha-D-ribose 1-phosphate: step 3/6. The protein operates within amino-acid biosynthesis; L-methionine biosynthesis via salvage pathway; L-methionine from S-methyl-5-thio-alpha-D-ribose 1-phosphate: step 4/6. In terms of biological role, bifunctional enzyme that catalyzes the enolization of 2,3-diketo-5-methylthiopentyl-1-phosphate (DK-MTP-1-P) into the intermediate 2-hydroxy-3-keto-5-methylthiopentenyl-1-phosphate (HK-MTPenyl-1-P), which is then dephosphorylated to form the acireductone 1,2-dihydroxy-3-keto-5-methylthiopentene (DHK-MTPene). In Pseudomonas syringae pv. syringae (strain B728a), this protein is Enolase-phosphatase E1.